Here is a 771-residue protein sequence, read N- to C-terminus: Probable glycosyltransferase STELLO1 (771 aa).

Residues 1–23 (MLVQDRAAPSPAKPPKSQIRELP) form a disordered region. The Cytoplasmic segment spans residues 1–50 (MLVQDRAAPSPAKPPKSQIRELPTHQQIRRRFSEPKNLDFSTWFSENLSR). Residues 51–71 (IAVFSLLIVTIVAFFFLYNTT) form a helical membrane-spanning segment. At 72-771 (DTASLLCFQS…EGDPLLMELV (700 aa)) the chain is on the lumenal side. N242 and N729 each carry an N-linked (GlcNAc...) asparagine glycan.

It belongs to the STELLO family. Homo- and heterodimer with STL2. Interacts with CESA1, CESA3, CESA4, CESA6, CESA7 and CESA8, but not with GOT1. In terms of tissue distribution, expressed in cells that are expanding or producing secondary cell walls.

The protein resides in the golgi apparatus membrane. Its function is as follows. Probable glycosyltransferase regulating the assembly and trafficking of cellulose synthase complexes. The protein is Probable glycosyltransferase STELLO1 of Arabidopsis thaliana (Mouse-ear cress).